Consider the following 408-residue polypeptide: S-adenosylmethionine synthase (408 aa).

Residue His16 participates in ATP binding. Mg(2+) is bound at residue Asp18. Position 44 (Glu44) interacts with K(+). The L-methionine site is built by Glu57 and Gln100. The interval Gln100–Arg110 is flexible loop. Residues Asp177–Lys179, Asp257, Arg263–Lys264, Ala280, and Lys284 each bind ATP. Asp257 is an L-methionine binding site. An L-methionine-binding site is contributed by Lys288.

The protein belongs to the AdoMet synthase family. Homotetramer; dimer of dimers. Mg(2+) is required as a cofactor. Requires K(+) as cofactor.

It localises to the cytoplasm. The enzyme catalyses L-methionine + ATP + H2O = S-adenosyl-L-methionine + phosphate + diphosphate. The protein operates within amino-acid biosynthesis; S-adenosyl-L-methionine biosynthesis; S-adenosyl-L-methionine from L-methionine: step 1/1. Functionally, catalyzes the formation of S-adenosylmethionine (AdoMet) from methionine and ATP. The overall synthetic reaction is composed of two sequential steps, AdoMet formation and the subsequent tripolyphosphate hydrolysis which occurs prior to release of AdoMet from the enzyme. This is S-adenosylmethionine synthase from Bifidobacterium animalis subsp. lactis (strain AD011).